A 159-amino-acid polypeptide reads, in one-letter code: Ribosomal RNA large subunit methyltransferase H (159 aa).

S-adenosyl-L-methionine-binding positions include Leu76, Gly108, and 127–132; that span reads FGKLTM.

It belongs to the RNA methyltransferase RlmH family. In terms of assembly, homodimer.

The protein localises to the cytoplasm. It catalyses the reaction pseudouridine(1915) in 23S rRNA + S-adenosyl-L-methionine = N(3)-methylpseudouridine(1915) in 23S rRNA + S-adenosyl-L-homocysteine + H(+). In terms of biological role, specifically methylates the pseudouridine at position 1915 (m3Psi1915) in 23S rRNA. This Lacticaseibacillus casei (strain BL23) (Lactobacillus casei) protein is Ribosomal RNA large subunit methyltransferase H.